A 590-amino-acid polypeptide reads, in one-letter code: Leishmanolysin (590 aa).

A signal peptide spans 1–39 (MSVDSSSTHRHRSVAARLVRLAAAGAAVIAAVGTAAAWA). Residues 40–87 (HAGAVQHRCIHDAMQARVRQSVARHHTAPGAVSAVGLSYVTLGAAPTV) constitute a propeptide, activation peptide. Intrachain disulfides connect Cys112–Cys129 and Cys178–Cys217. His251 serves as a coordination point for Zn(2+). Residue Glu252 is part of the active site. Residue His255 participates in Zn(2+) binding. The N-linked (GlcNAc...) asparagine glycan is linked to Asn287. Cystine bridges form between Cys301–Cys373, Cys380–Cys443, Cys393–Cys412, Cys402–Cys477, Cys454–Cys498, Cys503–Cys553, and Cys523–Cys546. Residue His321 coordinates Zn(2+). Asn565 carries the GPI-anchor amidated asparagine lipid modification. Residues 566-590 (AAAGRRGPRAAATALLVAALLAVAL) constitute a propeptide, removed in mature form.

Belongs to the peptidase M8 family. Zn(2+) is required as a cofactor.

The protein localises to the cell membrane. It carries out the reaction Preference for hydrophobic residues at P1 and P1' and basic residues at P2' and P3'. A model nonapeptide is cleaved at -Ala-Tyr-|-Leu-Lys-Lys-.. Has an integral role during the infection of macrophages in the mammalian host. The protein is Leishmanolysin (gp63) of Leishmania donovani.